The chain runs to 179 residues: Gamma-glutamyl cyclotransferase verK (179 aa).

Belongs to the class-I pyridoxal-phosphate-dependent aminotransferase family.

The catalysed reaction is an alpha-(gamma-L-glutamyl)-L-amino acid = 5-oxo-L-proline + an L-alpha-amino acid. It participates in mycotoxin biosynthesis. In terms of biological role, gamma-glutamyl cyclotransferase; part of the gene cluster that mediates the biosynthesis of 11'-deoxyverticillin A, one of the dimeric epipolythiodioxopiperazines (ETPs) from the verticillin family that act as mycotoxins. 11'-deoxyverticillin A is required for normal conidiation. The nonribosomal peptide synthetase verP is speculated to be responsible for condensation of amino acids to form the carbon skeleton of verticillin, whereas the cluster-specific tailoring enzymes are involved in further modifications leading to the production of 11'-deoxyverticillin A. In Clonostachys rogersoniana, this protein is Gamma-glutamyl cyclotransferase verK.